The chain runs to 189 residues: Movement protein (189 aa).

The protein belongs to the tombusvirus/aureusvirus movement protein p22 family. Interacts with host protein HFI22. Post-translationally, phosphorylated.

It localises to the host membrane. Functionally, transports viral genome to neighboring plant cells directly through plasmosdesmata, without any budding. The movement protein allows efficient cell to cell propagation, by bypassing the host cell wall barrier. Displays RNA-binding activity. The sequence is that of Movement protein from Capsicum annuum (Capsicum pepper).